The chain runs to 113 residues: Large ribosomal subunit protein bL19 (113 aa).

Belongs to the bacterial ribosomal protein bL19 family.

Its function is as follows. This protein is located at the 30S-50S ribosomal subunit interface and may play a role in the structure and function of the aminoacyl-tRNA binding site. The chain is Large ribosomal subunit protein bL19 from Moorella thermoacetica (strain ATCC 39073 / JCM 9320).